The following is a 115-amino-acid chain: NADH-ubiquinone oxidoreductase chain 3 (115 aa).

The next 3 helical transmembrane spans lie at 3 to 23, 55 to 75, and 84 to 104; these read LIMT…IAFW, FFLV…LLPL, and LTTM…SLAY.

Belongs to the complex I subunit 3 family. Core subunit of respiratory chain NADH dehydrogenase (Complex I) which is composed of 45 different subunits. Interacts with TMEM186. Interacts with TMEM242.

It is found in the mitochondrion inner membrane. It carries out the reaction a ubiquinone + NADH + 5 H(+)(in) = a ubiquinol + NAD(+) + 4 H(+)(out). In terms of biological role, core subunit of the mitochondrial membrane respiratory chain NADH dehydrogenase (Complex I) which catalyzes electron transfer from NADH through the respiratory chain, using ubiquinone as an electron acceptor. Essential for the catalytic activity of complex I. The protein is NADH-ubiquinone oxidoreductase chain 3 of Ailurus fulgens (Himalayan red panda).